The sequence spans 473 residues: Photosystem II CP43 reaction center protein (473 aa).

Residues 1–14 (MKTLYSLRRFYHVE) constitute a propeptide that is removed on maturation. Position 15 is an N-acetylthreonine (threonine 15). Threonine 15 is subject to Phosphothreonine. 5 consecutive transmembrane segments (helical) span residues 69–93 (LFEV…PHLA), 134–155 (LLGP…KDRN), 178–200 (KALY…RKIT), 255–275 (KPFA…LSYS), and 291–312 (WFNN…ASQA). Residue glutamate 367 coordinates [CaMn4O5] cluster. The helical transmembrane segment at 447–471 (RARAAAAGFEKGIDRDLEPVLFMTP) threads the bilayer.

Belongs to the PsbB/PsbC family. PsbC subfamily. In terms of assembly, PSII is composed of 1 copy each of membrane proteins PsbA, PsbB, PsbC, PsbD, PsbE, PsbF, PsbH, PsbI, PsbJ, PsbK, PsbL, PsbM, PsbT, PsbX, PsbY, PsbZ, Psb30/Ycf12, at least 3 peripheral proteins of the oxygen-evolving complex and a large number of cofactors. It forms dimeric complexes. Requires Binds multiple chlorophylls and provides some of the ligands for the Ca-4Mn-5O cluster of the oxygen-evolving complex. It may also provide a ligand for a Cl- that is required for oxygen evolution. PSII binds additional chlorophylls, carotenoids and specific lipids. as cofactor.

The protein resides in the plastid. Its subcellular location is the chloroplast thylakoid membrane. In terms of biological role, one of the components of the core complex of photosystem II (PSII). It binds chlorophyll and helps catalyze the primary light-induced photochemical processes of PSII. PSII is a light-driven water:plastoquinone oxidoreductase, using light energy to abstract electrons from H(2)O, generating O(2) and a proton gradient subsequently used for ATP formation. The polypeptide is Photosystem II CP43 reaction center protein (Carica papaya (Papaya)).